A 508-amino-acid chain; its full sequence is Pyruvate kinase 2 (508 aa).

R50 contacts substrate. K(+) is bound by residues N52, S54, D85, and T86. 52 to 55 is a binding site for ATP; that stretch reads NFSH. ATP-binding residues include R92 and K178. E243 provides a ligand contact to Mg(2+). The substrate site is built by G266, D267, and T299. D267 contributes to the Mg(2+) binding site.

The protein belongs to the pyruvate kinase family. In terms of assembly, homotetramer. The cofactor is Mg(2+). K(+) serves as cofactor.

It carries out the reaction pyruvate + ATP = phosphoenolpyruvate + ADP + H(+). It participates in carbohydrate degradation; glycolysis; pyruvate from D-glyceraldehyde 3-phosphate: step 5/5. This is Pyruvate kinase 2 (PYK2) from Candida glabrata (strain ATCC 2001 / BCRC 20586 / JCM 3761 / NBRC 0622 / NRRL Y-65 / CBS 138) (Yeast).